The following is a 208-amino-acid chain: Thymidylate kinase (208 aa).

Residue 10–17 (GLEGAGKS) coordinates ATP.

It belongs to the thymidylate kinase family.

It carries out the reaction dTMP + ATP = dTDP + ADP. Its function is as follows. Phosphorylation of dTMP to form dTDP in both de novo and salvage pathways of dTTP synthesis. This chain is Thymidylate kinase, found in Pseudoalteromonas translucida (strain TAC 125).